The primary structure comprises 966 residues: Mitogen-activated protein kinase kinase kinase 13 (966 aa).

Disordered regions lie at residues 1 to 22 (MANF…SESK) and 93 to 112 (SEMA…STSG). The span at 96 to 112 (AVSQGNSNTVDAESTSG) shows a compositional bias: polar residues. Residues 168-409 (ISELQWLGSG…FRQTLMHLDI (242 aa)) enclose the Protein kinase domain. ATP contacts are provided by residues 174 to 182 (LGSGAQGAV) and lysine 195. Aspartate 279 acts as the Proton acceptor in catalysis. 2 leucine-zipper regions span residues 433-454 (VKKH…DEEL) and 486-507 (LSAI…EQAV). Disordered regions lie at residues 534-652 (KRKG…SQSH), 744-834 (DIPS…RRQR), 846-873 (STFS…PDEL), and 887-906 (DLLS…SDGL). The span at 567-581 (SPLSGSPKMSTSSSK) shows a compositional bias: low complexity. A compositionally biased stretch (basic residues) spans 582 to 594 (SRYRSKPRHRRGN). Composition is skewed to polar residues over residues 609 to 629 (QPAQ…SQYP) and 781 to 795 (FSSC…TSHL). A compositionally biased stretch (acidic residues) spans 814-827 (DSSEEEEGEVDSEV). Positions 815–828 (SSEEEEGEVDSEVE) are acidic. Over residues 846 to 855 (STFSSENFSV) the composition is skewed to polar residues.

This sequence belongs to the protein kinase superfamily. STE Ser/Thr protein kinase family. MAP kinase kinase kinase subfamily. In terms of assembly, homodimer; forms dimers through the leucine-zipper motif. Interacts with the C-terminus of MAPK8IP1 through the kinase catalytic domain. Binds PRDX3. Associates with the IKK complex through the kinase domain. It depends on Mg(2+) as a cofactor. Autophosphorylated on serine and threonine residues.

The protein localises to the cytoplasm. The protein resides in the membrane. It carries out the reaction L-seryl-[protein] + ATP = O-phospho-L-seryl-[protein] + ADP + H(+). The catalysed reaction is L-threonyl-[protein] + ATP = O-phospho-L-threonyl-[protein] + ADP + H(+). Activated by autophosphorylation and homodimerization. In terms of biological role, activates the JUN N-terminal pathway through activation of the MAP kinase kinase MAP2K7. Acts synergistically with PRDX3 to regulate the activation of NF-kappa-B in the cytosol. This activation is kinase-dependent and involves activating the IKK complex, the IKBKB-containing complex that phosphorylates inhibitors of NF-kappa-B. This is Mitogen-activated protein kinase kinase kinase 13 from Pongo abelii (Sumatran orangutan).